Here is a 285-residue protein sequence, read N- to C-terminus: MTARLIDGRQVAQQVHEEVRQAVERHTAQGRRAPGLAVVLVGENPASQVYVRNKRRTCEALGIESRSHDLPADTPQSVLLDLIDALNADPAVDGILVQLPLPAHFDTETVIERIDPAKDVDGFHPYNVGRLAVRLPTLRPCTPYGVMRLLDSTGEVYKGRNAVVVGASNIVGRPMALELMLAGATVTVCHRFTTDTAEHVARADIVVVAVGRPDLVPGEWIKPGATVIDVGMNRLEDGRLVGDVSFAAAAERAAWITPVPGGVGPMTVAMLMKNTIQSYESRLGR.

166 to 168 (GAS) contacts NADP(+).

The protein belongs to the tetrahydrofolate dehydrogenase/cyclohydrolase family. As to quaternary structure, homodimer.

It catalyses the reaction (6R)-5,10-methylene-5,6,7,8-tetrahydrofolate + NADP(+) = (6R)-5,10-methenyltetrahydrofolate + NADPH. It carries out the reaction (6R)-5,10-methenyltetrahydrofolate + H2O = (6R)-10-formyltetrahydrofolate + H(+). It functions in the pathway one-carbon metabolism; tetrahydrofolate interconversion. Its function is as follows. Catalyzes the oxidation of 5,10-methylenetetrahydrofolate to 5,10-methenyltetrahydrofolate and then the hydrolysis of 5,10-methenyltetrahydrofolate to 10-formyltetrahydrofolate. The chain is Bifunctional protein FolD from Thioalkalivibrio sulfidiphilus (strain HL-EbGR7).